The chain runs to 201 residues: Orotate phosphoribosyltransferase (201 aa).

113–121 contacts 5-phospho-alpha-D-ribose 1-diphosphate; it reads EDIITTGKS. Positions 117 and 145 each coordinate orotate.

The protein belongs to the purine/pyrimidine phosphoribosyltransferase family. PyrE subfamily. Homodimer. Mg(2+) serves as cofactor.

The catalysed reaction is orotidine 5'-phosphate + diphosphate = orotate + 5-phospho-alpha-D-ribose 1-diphosphate. Its pathway is pyrimidine metabolism; UMP biosynthesis via de novo pathway; UMP from orotate: step 1/2. In terms of biological role, catalyzes the transfer of a ribosyl phosphate group from 5-phosphoribose 1-diphosphate to orotate, leading to the formation of orotidine monophosphate (OMP). This chain is Orotate phosphoribosyltransferase, found in Helicobacter acinonychis (strain Sheeba).